A 97-amino-acid polypeptide reads, in one-letter code: U6-theraphotoxin-Hhn1a 4 (97 aa).

The N-terminal stretch at 1 to 33 is a signal peptide; the sequence is MLIKQFSRRSKNMKVQILLAFAALFVLAVGSYA. Residues 34-61 constitute a propeptide that is removed on maturation; the sequence is SESKKLDLRDALLSAMFSADYQLNPQER. 3 cysteine pairs are disulfide-bonded: C63–C77, C70–C82, and C76–C89.

This sequence belongs to the neurotoxin 10 (Hwtx-1) family. 12 (Hntx-12) subfamily. As to expression, expressed by the venom gland.

It localises to the secreted. Its function is as follows. Ion channel inhibitor. This is U6-theraphotoxin-Hhn1a 4 from Cyriopagopus hainanus (Chinese bird spider).